The following is a 148-amino-acid chain: Large ribosomal subunit protein bL9 (148 aa).

It belongs to the bacterial ribosomal protein bL9 family.

In terms of biological role, binds to the 23S rRNA. This chain is Large ribosomal subunit protein bL9, found in Hydrogenobaculum sp. (strain Y04AAS1).